The chain runs to 412 residues: AA9 family lytic polysaccharide monooxygenase A (412 aa).

Positions 1-20 (MKTTTYSLLALAAASKLASA) are cleaved as a signal peptide. Residues histidine 21 and histidine 103 each contribute to the Cu(2+) site. An intrachain disulfide couples cysteine 63 to cysteine 186. An N-linked (GlcNAc...) asparagine glycan is attached at asparagine 151. Histidine 172 serves as a coordination point for O2. Tyrosine 183 is a binding site for Cu(2+). Asparagine 334 and asparagine 385 each carry an N-linked (GlcNAc...) asparagine glycan. The CBM1 domain maps to 373 to 409 (GVAKMYERCGGINHTGPTTCESGSVCKKWNPYYYQCV).

This sequence belongs to the polysaccharide monooxygenase AA9 family. The cofactor is Cu(2+).

It is found in the secreted. It catalyses the reaction [(1-&gt;4)-beta-D-glucosyl]n+m + reduced acceptor + O2 = 4-dehydro-beta-D-glucosyl-[(1-&gt;4)-beta-D-glucosyl]n-1 + [(1-&gt;4)-beta-D-glucosyl]m + acceptor + H2O.. Its function is as follows. Lytic polysaccharide monooxygenase (LPMO) that depolymerizes crystalline and amorphous polysaccharides via the oxidation of scissile alpha- or beta-(1-4)-glycosidic bonds, yielding C4 oxidation products. Catalysis by LPMOs requires the reduction of the active-site copper from Cu(II) to Cu(I) by a reducing agent and H(2)O(2) or O(2) as a cosubstrate. This is AA9 family lytic polysaccharide monooxygenase A (eglD) from Aspergillus niger (strain ATCC MYA-4892 / CBS 513.88 / FGSC A1513).